A 236-amino-acid polypeptide reads, in one-letter code: UPF0257 lipoprotein YnfC (236 aa).

The N-terminal stretch at 1 to 16 (MKKPLLLTLLCMILAG) is a signal peptide. Residue Cys17 is the site of N-palmitoyl cysteine attachment. Cys17 carries the S-diacylglycerol cysteine lipid modification.

It belongs to the UPF0257 family.

It is found in the cell membrane. The sequence is that of UPF0257 lipoprotein YnfC from Salmonella dublin (strain CT_02021853).